Consider the following 395-residue polypeptide: Neuromedin-U receptor 2 (395 aa).

Topologically, residues 1–41 (MGKLENASWIHDPLMKYLNSTEEYLAHLCGPKRSDLSLPVS) are extracellular. Residues Asn6 and Asn19 are each glycosylated (N-linked (GlcNAc...) asparagine). The helical transmembrane segment at 42–62 (VAYALIFLVGVMGNLLVCMVI) threads the bilayer. Residues 63–74 (VRHQTLKTPTNY) are Cytoplasmic-facing. A helical transmembrane segment spans residues 75–95 (YLFSLAVSDLLVLLLGMPLEI). The Extracellular segment spans residues 96-115 (YEMWHNYPFLFGPVGCYFKT). Cys111 and Cys196 form a disulfide bridge. The helical transmembrane segment at 116–138 (ALFETVCFASILSVTTVSVERYV) threads the bilayer. Over 139-157 (AIVHPFRAKLESTRRRALR) the chain is Cytoplasmic. The helical transmembrane segment at 158-178 (ILSLVWSFSVVFSLPNTSIHG) threads the bilayer. Residues 179–212 (IKFQHFPNGSSVPGSATCTVTKPMWVYNLIIQAT) lie on the Extracellular side of the membrane. The N-linked (GlcNAc...) asparagine glycan is linked to Asn186. The helical transmembrane segment at 213 to 233 (SFLFYILPMTLISVLYYLMGL) threads the bilayer. Topologically, residues 234–257 (RLKRDESLEANKVAVNIHRPSRKS) are cytoplasmic. Residues 258–278 (VTKMLFVLVLVFAICWTPFHV) form a helical membrane-spanning segment. Residues 279-293 (DRLFFSFVEEWTESL) lie on the Extracellular side of the membrane. A helical membrane pass occupies residues 294 to 314 (AAVFNLIHVVSGVFFYLSSAV). The Cytoplasmic portion of the chain corresponds to 315 to 395 (NPIIYNLLSR…TTAPCAGEVP (81 aa)). Residues 374–395 (FPGQSSIHNTNLTTAPCAGEVP) form a disordered region. Residues 375–387 (PGQSSIHNTNLTT) show a composition bias toward polar residues.

It belongs to the G-protein coupled receptor 1 family. As to expression, the highest level is detected in the uterus. In the central nervous system, high expression levels were found in the hypothalamus and moderate levels in both the medulla oblongata and spinal cord. Expressed in the hypothalamic paraventricular nucleus (PVN) and suprachiasmatic nuclei (SCN) of the hypothalamus. Expression is low in the gastrointestinal tract. In other peripheral tissues, moderate expression was observed in the lung and ovary.

It is found in the cell membrane. Receptor for the neuromedin-U and neuromedin-S neuropeptides. This Rattus norvegicus (Rat) protein is Neuromedin-U receptor 2 (Nmur2).